Consider the following 234-residue polypeptide: Transcription factor bHLH160 (234 aa).

A compositionally biased stretch (polar residues) spans 1–13 (MSSQPNHQTSISS). The segment at 1–67 (MSSQPNHQTS…GAAKKQDHNA (67 aa)) is disordered. Residues 27-37 (IVEKESAEKDT) are compositionally biased toward basic and acidic residues. The bHLH domain maps to 60–115 (AKKQDHNAKERLRRMRLHASYLTLGTLLPDHSSSSSKKKWSAPSIIDNVITYIPKL).

This sequence belongs to the bHLH protein family.

It localises to the nucleus. This Arabidopsis thaliana (Mouse-ear cress) protein is Transcription factor bHLH160.